Consider the following 149-residue polypeptide: Transcriptional repressor NrdR (149 aa).

Residues 3-34 (CPFCSATDTKVIDSRLVADGHQVRRRRECVQC) fold into a zinc finger. The ATP-cone domain maps to 49-139 (PRVVKQDGSR…VYRAFEDVSE (91 aa)).

It belongs to the NrdR family. Zn(2+) is required as a cofactor.

Negatively regulates transcription of bacterial ribonucleotide reductase nrd genes and operons by binding to NrdR-boxes. In Shewanella piezotolerans (strain WP3 / JCM 13877), this protein is Transcriptional repressor NrdR.